We begin with the raw amino-acid sequence, 494 residues long: Aspartyl/glutamyl-tRNA(Asn/Gln) amidotransferase subunit B (494 aa).

It belongs to the GatB/GatE family. GatB subfamily. Heterotrimer of A, B and C subunits.

The enzyme catalyses L-glutamyl-tRNA(Gln) + L-glutamine + ATP + H2O = L-glutaminyl-tRNA(Gln) + L-glutamate + ADP + phosphate + H(+). The catalysed reaction is L-aspartyl-tRNA(Asn) + L-glutamine + ATP + H2O = L-asparaginyl-tRNA(Asn) + L-glutamate + ADP + phosphate + 2 H(+). Functionally, allows the formation of correctly charged Asn-tRNA(Asn) or Gln-tRNA(Gln) through the transamidation of misacylated Asp-tRNA(Asn) or Glu-tRNA(Gln) in organisms which lack either or both of asparaginyl-tRNA or glutaminyl-tRNA synthetases. The reaction takes place in the presence of glutamine and ATP through an activated phospho-Asp-tRNA(Asn) or phospho-Glu-tRNA(Gln). The protein is Aspartyl/glutamyl-tRNA(Asn/Gln) amidotransferase subunit B of Trichodesmium erythraeum (strain IMS101).